We begin with the raw amino-acid sequence, 902 residues long: Zinc finger CCCH-type antiviral protein 1 (902 aa).

At alanine 2 the chain carries N-acetylalanine. An N-terminal domain region spans residues 2–254; that stretch reads ADPEVCCFIT…ARSKSRDRFF (253 aa). Residues 69 to 76 carry the Nuclear localization signal motif; the sequence is RARVCRRK. C3H1-type zinc fingers lie at residues 73 to 86, 88 to 110, 150 to 172, and 169 to 193; these read CRRK…DNLH, CKLN…KYSH, CKSY…SRLH, and SRLH…SHNL. Residues 221–251 form a disordered region; sequence SKHMQKNPPGPRAPSSHRRNMAYRARSKSRD. A binding to EXOSC5 region spans residues 224 to 254; the sequence is MQKNPPGPRAPSSHRRNMAYRARSKSRDRFF. Over residues 235-247 the composition is skewed to basic residues; sequence SSHRRNMAYRARS. Phosphoserine; by GSK3-beta occurs at positions 257, 263, 267, and 271. A compositionally biased stretch (polar residues) spans 265-278; the sequence is SASAERSCTPSPDQ. Disordered regions lie at residues 265–287 and 299–373; these read SASA…SLED and YLGS…GARR. Position 273 is a phosphothreonine (threonine 273). Phosphoserine is present on residues serine 275 and serine 284. Residues 285-292 carry the Nuclear export signal motif; that stretch reads LEDAPVDD. Phosphoserine occurs at positions 302, 327, 335, 355, 378, and 387. Polar residues-rich tracts occupy residues 310–336 and 344–369; these read SGSS…NGSQ and PGST…TNDQ. A Phosphothreonine modification is found at threonine 393. Residues serine 407, serine 469, serine 492, and serine 494 each carry the phosphoserine modification. The segment at 445–481 is disordered; the sequence is LNYKSTSSGHREISSPRIQDAGPASRDVQATGRIADD. Position 554 is a phosphothreonine (threonine 554). Phosphoserine occurs at positions 572 and 590. Residues 594–681 enclose the WWE domain; sequence SVTKPANSVF…ASKTQKDVIR (88 aa). Residues 716 to 902 enclose the PARP catalytic domain; sequence PQEDFCFLSS…YTEDKACVIS (187 aa).

It belongs to the ARTD/PARP family. As to quaternary structure, homodimer or homooligomer. Homooligomerization is essential for its antiviral activity. Interacts with EXOSC5. Interacts (via N-terminal domain) with DDX17 in an RNA-independent manner. Interacts with EXOSC3, EXOSC7, DCP2 and DCP1A. Interacts with PARN in an RNA-independent manner. Interacts with XRN1 in an RNA-dependent manner. Isoform 2 interacts (via zinc-fingers) with RIGI in an RNA-dependent manner. Interacts (via N-terminal domain) with DHX30 (via N-terminus) in an RNA-independent manner. Phosphorylation at Ser-275 is essential for sequential phosphorylation of Ser-271, Ser-267, Ser-263 and Ser-257 by GSK3-beta. Phosphorylation by GSK3-beta enhances its antiviral activity.

The protein localises to the cytoplasm. It is found in the nucleus. Functionally, antiviral protein which inhibits the replication of viruses by recruiting the cellular RNA degradation machineries to degrade the viral mRNAs. Binds to a ZAP-responsive element (ZRE) present in the target viral mRNA, recruits cellular poly(A)-specific ribonuclease PARN to remove the poly(A) tail, and the 3'-5' exoribonuclease complex exosome to degrade the RNA body from the 3'-end. It also recruits the decapping complex DCP1-DCP2 through RNA helicase p72 (DDX17) to remove the cap structure of the viral mRNA to initiate its degradation from the 5'-end. Its target viruses belong to families which include retroviridae: human immunodeficiency virus type 1 (HIV-1), moloney and murine leukemia virus (MoMLV) and xenotropic MuLV-related virus (XMRV), filoviridae: ebola virus (EBOV) and marburg virus (MARV), togaviridae: sindbis virus (SINV) and Ross river virus (RRV). Specifically targets the multiply spliced but not unspliced or singly spliced HIV-1 mRNAs for degradation. Isoform 1 is a more potent viral inhibitor than isoform 2. Isoform 2 acts as a positive regulator of RIGI signaling resulting in activation of the downstream effector IRF3 leading to the expression of type I IFNs and IFN stimulated genes (ISGs). This is Zinc finger CCCH-type antiviral protein 1 from Homo sapiens (Human).